The following is a 150-amino-acid chain: uncharacterized protein (150 aa).

Residues 1–22 (MVIALKRFSFLASIATLTVLNA) form the signal peptide. The N-palmitoyl cysteine moiety is linked to residue C23. C23 is lipidated: S-diacylglycerol cysteine.

Belongs to the MG067/MG068/MG395 family.

The protein localises to the cell membrane. This is an uncharacterized protein from Mycoplasma pneumoniae (strain ATCC 29342 / M129 / Subtype 1) (Mycoplasmoides pneumoniae).